Reading from the N-terminus, the 171-residue chain is Large ribosomal subunit protein uL10 (171 aa).

This sequence belongs to the universal ribosomal protein uL10 family. In terms of assembly, part of the ribosomal stalk of the 50S ribosomal subunit. The N-terminus interacts with L11 and the large rRNA to form the base of the stalk. The C-terminus forms an elongated spine to which L12 dimers bind in a sequential fashion forming a multimeric L10(L12)X complex.

Forms part of the ribosomal stalk, playing a central role in the interaction of the ribosome with GTP-bound translation factors. The chain is Large ribosomal subunit protein uL10 from Corynebacterium jeikeium (strain K411).